Reading from the N-terminus, the 196-residue chain is Imidazoleglycerol-phosphate dehydratase (196 aa).

Belongs to the imidazoleglycerol-phosphate dehydratase family.

The protein localises to the cytoplasm. The enzyme catalyses D-erythro-1-(imidazol-4-yl)glycerol 3-phosphate = 3-(imidazol-4-yl)-2-oxopropyl phosphate + H2O. It participates in amino-acid biosynthesis; L-histidine biosynthesis; L-histidine from 5-phospho-alpha-D-ribose 1-diphosphate: step 6/9. The sequence is that of Imidazoleglycerol-phosphate dehydratase from Clostridium botulinum (strain Langeland / NCTC 10281 / Type F).